A 247-amino-acid polypeptide reads, in one-letter code: Protein-L-isoaspartate O-methyltransferase 2 (247 aa).

Ser97 is a catalytic residue.

Belongs to the methyltransferase superfamily. L-isoaspartyl/D-aspartyl protein methyltransferase family.

The protein localises to the cytoplasm. The catalysed reaction is [protein]-L-isoaspartate + S-adenosyl-L-methionine = [protein]-L-isoaspartate alpha-methyl ester + S-adenosyl-L-homocysteine. In terms of biological role, catalyzes the methyl esterification of L-isoaspartyl residues in peptides and proteins that result from spontaneous decomposition of normal L-aspartyl and L-asparaginyl residues. It plays a role in the repair and/or degradation of damaged proteins. The sequence is that of Protein-L-isoaspartate O-methyltransferase 2 from Syntrophobacter fumaroxidans (strain DSM 10017 / MPOB).